The sequence spans 423 residues: Putative competence-damage inducible protein (423 aa).

The protein belongs to the CinA family.

This is Putative competence-damage inducible protein from Streptococcus pyogenes serotype M6 (strain ATCC BAA-946 / MGAS10394).